Reading from the N-terminus, the 435-residue chain is uncharacterized protein (435 aa).

The next 12 membrane-spanning stretches (helical) occupy residues 26–46, 61–81, 96–116, 119–139, 150–170, 177–197, 242–262, 281–301, 325–345, 347–367, 385–405, and 407–427; these read LLSGIIILNYFDRVAISVAAP, IVFSIYTYSYTLMQLPVGSLL, IWSFLTILLAFLQGKLLLYLF, LIGLTSASAFPAASKATALWF, LFDSAAKFSNVIGAPLVAFLV, VAFLTIGCINVLFTIFFWQYY, VWGLMIGFTGYGYTFNLLLTW, FTAVPWLISTISGIAVGGWLV, FGFFFLGSILTNNITVAIICI, IGLAGISATAPVGWSISAELA, LFGGIIAASLTGYLFDVTGSF, and LSFLVAGFVLLLGLVFYVFVL.

It belongs to the major facilitator superfamily. Phthalate permease family.

It localises to the cell membrane. This is an uncharacterized protein from Bacillus subtilis (strain 168).